Reading from the N-terminus, the 38-residue chain is Photosystem I reaction center subunit IX (38 aa).

Residues 4 to 24 form a helical membrane-spanning segment; sequence FLTTAPVVAAIWFTLTAGILI.

This sequence belongs to the PsaJ family.

It localises to the cellular thylakoid membrane. Its function is as follows. May help in the organization of the PsaE and PsaF subunits. In Parasynechococcus marenigrum (strain WH8102), this protein is Photosystem I reaction center subunit IX.